The sequence spans 802 residues: Neuronal PAS domain-containing protein 4 (802 aa).

The segment at 1–13 (MYRSTKGASKARR) is basic motif; degenerate. One can recognise a bHLH domain in the interval 1–53 (MYRSTKGASKARRDQINAEIRNLKELLPLAEADKVRLSYLHIMSLACIYTRKG). Residues 5-38 (TKGASKARRDQINAEIRNLKELLPLAEADKVRLS) are a coiled coil. Residues 14–53 (DQINAEIRNLKELLPLAEADKVRLSYLHIMSLACIYTRKG) form a helix-loop-helix motif region. PAS domains lie at 70 to 144 (SAQE…LDAD) and 203 to 275 (PGPG…LAEN). The 40-residue stretch at 280 to 319 (AEMVVRLQAKHGGWTWIYCMLYSDGPEGPITANNYPISDT) folds into the PAC domain. 3 stretches are compositionally biased toward polar residues: residues 472-495 (PSSA…SSAR), 502-518 (TPCT…STAT), and 527-555 (THEQ…QLSP). Residues 472 to 555 (PSSATFPDPL…SQTFPEQLSP (84 aa)) form a disordered region. A coiled-coil region spans residues 624 to 648 (YTEKEQNEIDRLIQQISQLAQGMDR).

In terms of assembly, efficient DNA binding requires dimerization with another bHLH protein. Heterodimer; forms a heterodimer with ARNT, ARNT2 or BMAL1. Ubiquitinated, leading to degradation by the proteosome. In terms of tissue distribution, specifically expressed in neurons. Expressed in the lateral nucleus of the amygdala (at protein level).

The protein localises to the nucleus. In terms of biological role, transcription factor expressed in neurons of the brain that regulates the excitatory-inhibitory balance within neural circuits and is required for contextual memory in the hippocampus. Plays a key role in the structural and functional plasticity of neurons. Acts as an early-response transcription factor in both excitatory and inhibitory neurons, where it induces distinct but overlapping sets of late-response genes in these two types of neurons, allowing the synapses that form on inhibitory and excitatory neurons to be modified by neuronal activity in a manner specific to their function within a circuit, thereby facilitating appropriate circuit responses to sensory experience. In excitatory neurons, activates transcription of BDNF, which in turn controls the number of GABA-releasing synapses that form on excitatory neurons, thereby promoting an increased number of inhibitory synapses on excitatory neurons. In inhibitory neurons, regulates a distinct set of target genes that serve to increase excitatory input onto somatostatin neurons, probably resulting in enhanced feedback inhibition within cortical circuits. The excitatory and inhibitory balance in neurons affects a number of processes, such as short-term and long-term memory, acquisition of experience, fear memory, response to stress and social behavior. Acts as a regulator of dendritic spine development in olfactory bulb granule cells in a sensory-experience-dependent manner by regulating expression of MDM2. Efficient DNA binding requires dimerization with another bHLH protein, such as ARNT, ARNT2 or BMAL1. Can activate the CME (CNS midline enhancer) element. The sequence is that of Neuronal PAS domain-containing protein 4 from Rattus norvegicus (Rat).